Reading from the N-terminus, the 439-residue chain is 5-hydroxybenzimidazole synthase (439 aa).

Substrate-binding positions include Met-96, Tyr-125, His-164, 187-189, 228-231, and Glu-267; these read SKG and NGIR. His-271 contributes to the Zn(2+) binding site. Position 294 (Tyr-294) interacts with substrate. His-335 is a binding site for Zn(2+). [4Fe-4S] cluster is bound by residues Cys-410, Cys-413, and Cys-417.

The protein belongs to the ThiC family. 5-hydroxybenzimidazole synthase subfamily. Homodimer. Requires [4Fe-4S] cluster as cofactor.

The catalysed reaction is 5-amino-1-(5-phospho-beta-D-ribosyl)imidazole + AH2 + S-adenosyl-L-methionine = 5-hydroxybenzimidazole + 5'-deoxyadenosine + formate + L-methionine + A + NH4(+) + phosphate + 2 H(+). Catalyzes the conversion of aminoimidazole ribotide (AIR) to 5-hydroxybenzimidazole (5-HBI) in a radical S-adenosyl-L-methionine (SAM)-dependent reaction. Is thus involved in the anaerobic biosynthesis of the benzimidazole lower axial ligand of the cobamide produced by D.autotrophicum. The sequence is that of 5-hydroxybenzimidazole synthase from Desulforapulum autotrophicum (strain ATCC 43914 / DSM 3382 / VKM B-1955 / HRM2) (Desulfobacterium autotrophicum).